Reading from the N-terminus, the 220-residue chain is Thiamine-phosphate synthase (220 aa).

Residues 39–43 and N80 each bind 4-amino-2-methyl-5-(diphosphooxymethyl)pyrimidine; that span reads QLRDK. Mg(2+)-binding residues include D81 and D100. 4-amino-2-methyl-5-(diphosphooxymethyl)pyrimidine is bound at residue S119. Residue 145–147 coordinates 2-[(2R,5Z)-2-carboxy-4-methylthiazol-5(2H)-ylidene]ethyl phosphate; the sequence is TPT. K148 lines the 4-amino-2-methyl-5-(diphosphooxymethyl)pyrimidine pocket. 2-[(2R,5Z)-2-carboxy-4-methylthiazol-5(2H)-ylidene]ethyl phosphate is bound at residue G176.

The protein belongs to the thiamine-phosphate synthase family. It depends on Mg(2+) as a cofactor.

The catalysed reaction is 2-[(2R,5Z)-2-carboxy-4-methylthiazol-5(2H)-ylidene]ethyl phosphate + 4-amino-2-methyl-5-(diphosphooxymethyl)pyrimidine + 2 H(+) = thiamine phosphate + CO2 + diphosphate. It catalyses the reaction 2-(2-carboxy-4-methylthiazol-5-yl)ethyl phosphate + 4-amino-2-methyl-5-(diphosphooxymethyl)pyrimidine + 2 H(+) = thiamine phosphate + CO2 + diphosphate. It carries out the reaction 4-methyl-5-(2-phosphooxyethyl)-thiazole + 4-amino-2-methyl-5-(diphosphooxymethyl)pyrimidine + H(+) = thiamine phosphate + diphosphate. Its pathway is cofactor biosynthesis; thiamine diphosphate biosynthesis; thiamine phosphate from 4-amino-2-methyl-5-diphosphomethylpyrimidine and 4-methyl-5-(2-phosphoethyl)-thiazole: step 1/1. Condenses 4-methyl-5-(beta-hydroxyethyl)thiazole monophosphate (THZ-P) and 2-methyl-4-amino-5-hydroxymethyl pyrimidine pyrophosphate (HMP-PP) to form thiamine monophosphate (TMP). In Mycobacterium marinum (strain ATCC BAA-535 / M), this protein is Thiamine-phosphate synthase.